The primary structure comprises 944 residues: Ras guanine nucleotide exchange factor O (944 aa).

An RING-type zinc finger spans residues 16 to 54 (CGICQNLFKDPNTLIPCGHAFCLDCLTTNASIKNCIQCK). The tract at residues 80-102 (NNSNNNSNGENTNNNNNIINNER) is disordered. The segment at 152-192 (NNIRYCMEHYEHYYAFCNDCQAPVCPSCLLTTHNRHGMIPL) adopts a B box-type zinc-finger fold. Positions 157, 160, 179, and 184 each coordinate Zn(2+). Coiled coils occupy residues 200 to 234 (KMKE…LLDS) and 271 to 303 (ASHM…KFKD). The region spanning 402 to 528 (EEFEVKYGSL…LLLNSNENSP (127 aa)) is the N-terminal Ras-GEF domain. Disordered stretches follow at residues 530–562 (ITSS…LQPT), 587–623 (TNNG…SSPS), and 644–670 (ESPL…FGAS). The span at 590–604 (GTCKIQNSPPKNYQQ) shows a compositional bias: polar residues. Composition is skewed to low complexity over residues 605–623 (SNYS…SSPS) and 648–670 (NSPR…FGAS). Residues 727–944 (DEFEIAKQLT…EYLNVHIDEL (218 aa)) enclose the Ras-GEF domain.

In terms of biological role, promotes the exchange of Ras-bound GDP by GTP. This is Ras guanine nucleotide exchange factor O (gefO) from Dictyostelium discoideum (Social amoeba).